Here is a 493-residue protein sequence, read N- to C-terminus: Cytochrome P450 monooxygenase esdpG (493 aa).

Residues 10–30 (VLGVTWLSALFTLGSLSVFWL) form a helical membrane-spanning segment. Residue Cys-434 coordinates heme.

The protein belongs to the cytochrome P450 family. It depends on heme as a cofactor.

It is found in the membrane. It participates in secondary metabolite biosynthesis; terpenoid biosynthesis. Functionally, cytochrome P450 monooxygenasee; part of the cluster that mediates the biosynthesis of shearones, diterpenoid pyrones (DPs) which are structurally diverse meroterpenoids consisting of a diterpene linked by a pyrone, and which may exhibit a range of bioactivities. Whitin the pathway, esdpG takes part in the molecular scaffold modification via the hydroxylation at C-11 and C-12 and can transform shearone A into shearone C and shearone B into shearone D. The molecular scaffold is commonly biosynthesized by a series of enzymes including the non-reducing polyketide synthase (NR-PKS) esdpA that generates an alpha-pyrone; the prenyltransferase esdpC that attaches a geranylgeranyl pyrophosphate (GGPP) produced by the GGPP synthase (GGPPS) esdpD onto the pyrone unit; the FAD-dependent monooxygenase esdpE that converts an olefin on the diterpene unit into an epoxide; and the terpene cyclase esdpB that catalyzes the cyclization reactions to give the molecular backbone shearone A. In the modification steps, esdpF oxidizes the hydroxy group to a ketone at C-3 and esdpG then attaches hydroxy groups at both C-11 and C-12. After that, esdpI hydroxylates at C-20 and esdpH hydroxylates at C-6'. The ether bridge is generated by nucleophilic attack of the hydroxy group at C-20 to the carbonyl carbon at C-3. EsdpH can also functions prior to esdpI. The different combinations of these modification enzymes lead to the production of diverse shearone derivatives, shearone I being the end product of the pathway. The alpha-ketoglutarate-dependent dioxygenase esdpJ seems not to be involved in this pathway. This is Cytochrome P450 monooxygenase esdpG from Penicillium shearii (Eupenicillium shearii).